The primary structure comprises 293 residues: Ribosomal RNA small subunit methyltransferase H (293 aa).

Residues 34 to 36 (GGH), Asp-54, Leu-86, Asp-101, and Gln-108 contribute to the S-adenosyl-L-methionine site.

The protein belongs to the methyltransferase superfamily. RsmH family.

It is found in the cytoplasm. It carries out the reaction cytidine(1402) in 16S rRNA + S-adenosyl-L-methionine = N(4)-methylcytidine(1402) in 16S rRNA + S-adenosyl-L-homocysteine + H(+). Specifically methylates the N4 position of cytidine in position 1402 (C1402) of 16S rRNA. The protein is Ribosomal RNA small subunit methyltransferase H of Elusimicrobium minutum (strain Pei191).